The chain runs to 437 residues: Exosome complex component RRP45 (437 aa).

Phosphoserine is present on serine 65. The residue at position 297 (lysine 297) is an N6-acetyllysine; alternate. A Glycyl lysine isopeptide (Lys-Gly) (interchain with G-Cter in SUMO1); alternate cross-link involves residue lysine 297. Lysine 297 is covalently cross-linked (Glycyl lysine isopeptide (Lys-Gly) (interchain with G-Cter in SUMO2); alternate). Phosphoserine is present on residues serine 306 and serine 346. Residues 339-437 (IGEGIENSWG…KRRKKKRTAN (99 aa)) are disordered. Acidic residues predominate over residues 349–363 (DLEDSEKEEEEEGGI). Phosphoserine occurs at positions 392, 394, and 407. Polar residues predominate over residues 413–425 (AQTSANQKAPSKS). The segment covering 426 to 437 (QGKRRKKKRTAN) has biased composition (basic residues).

This sequence belongs to the RNase PH family. In terms of assembly, component of the RNA exosome core complex (Exo-9), composed of EXOSC1, EXOSC2, EXOSC3, EXOSC4, EXOSC5, EXOSC6, EXOSC7, EXOSC8 and EXOSC9; within the complex interacts with EXOSC3, EXOSC4, EXOSC5 and DIS3. The catalytically inactive RNA exosome core complex (Exo-9) associates with the catalytic subunit EXOSC10/RRP6. Exo-9 may associate with DIS3 to form the nucleolar exosome complex, or DIS3L to form the cytoplasmic exosome complex. Exo-9 is formed by a hexameric base ring consisting of the heterodimers EXOSC4-EXOSC9, EXOSC5-EXOSC8 and EXOSC6-EXOSC7, and a cap ring consisting of EXOSC1, EXOSC2 and EXOSC3. The RNA exosome complex associates with cofactors C1D/RRP47, MPHOSPH6/MPP6 and MTREX/MTR4. Interacts (via C-terminus region) with SETX (via N-terminus domain); the interaction enhances SETX sumoylation. Interacts with DIS3; the interaction is direct.

The protein localises to the cytoplasm. Its subcellular location is the nucleus. The protein resides in the nucleolus. It is found in the nucleoplasm. Its function is as follows. Non-catalytic component of the RNA exosome complex which has 3'-&gt;5' exoribonuclease activity and participates in a multitude of cellular RNA processing and degradation events. In the nucleus, the RNA exosome complex is involved in proper maturation of stable RNA species such as rRNA, snRNA and snoRNA, in the elimination of RNA processing by-products and non-coding 'pervasive' transcripts, such as antisense RNA species and promoter-upstream transcripts (PROMPTs), and of mRNAs with processing defects, thereby limiting or excluding their export to the cytoplasm. The RNA exosome may be involved in Ig class switch recombination (CSR) and/or Ig variable region somatic hypermutation (SHM) by targeting AICDA deamination activity to transcribed dsDNA substrates. In the cytoplasm, the RNA exosome complex is involved in general mRNA turnover and specifically degrades inherently unstable mRNAs containing AU-rich elements (AREs) within their 3' untranslated regions, and in RNA surveillance pathways, preventing translation of aberrant mRNAs. It seems to be involved in degradation of histone mRNA. The catalytic inactive RNA exosome core complex of 9 subunits (Exo-9) is proposed to play a pivotal role in the binding and presentation of RNA for ribonucleolysis, and to serve as a scaffold for the association with catalytic subunits and accessory proteins or complexes. EXOSC9 binds to ARE-containing RNAs. The sequence is that of Exosome complex component RRP45 (Exosc9) from Rattus norvegicus (Rat).